The following is a 431-amino-acid chain: Na(+)-translocating NADH-quinone reductase subunit F (431 aa).

A helical membrane pass occupies residues 10–30; the sequence is ISIASLVFCVIGLILSGIILI. Residues 41-133 enclose the 2Fe-2S ferredoxin-type domain; the sequence is CKLKINDDDS…DMCLEIEERY (93 aa). [2Fe-2S] cluster-binding residues include cysteine 76, cysteine 82, cysteine 85, and cysteine 117. Residues 136–286 form the FAD-binding FR-type domain; the sequence is ASSWEGTVVS…SGPYGESFMK (151 aa).

The protein belongs to the NqrF family. As to quaternary structure, composed of six subunits; NqrA, NqrB, NqrC, NqrD, NqrE and NqrF. [2Fe-2S] cluster is required as a cofactor. FAD serves as cofactor.

It is found in the cell inner membrane. The enzyme catalyses a ubiquinone + n Na(+)(in) + NADH + H(+) = a ubiquinol + n Na(+)(out) + NAD(+). Functionally, NQR complex catalyzes the reduction of ubiquinone-1 to ubiquinol by two successive reactions, coupled with the transport of Na(+) ions from the cytoplasm to the periplasm. The first step is catalyzed by NqrF, which accepts electrons from NADH and reduces ubiquinone-1 to ubisemiquinone by a one-electron transfer pathway. The sequence is that of Na(+)-translocating NADH-quinone reductase subunit F from Chlamydia caviae (strain ATCC VR-813 / DSM 19441 / 03DC25 / GPIC) (Chlamydophila caviae).